The following is a 166-amino-acid chain: Putative protein PTGES3L (166 aa).

One can recognise a CS domain in the interval 46-154 (RQHARTLWYD…RPPPAMDDLD (109 aa)). The segment at 142–166 (STKRPPPAMDDLDDDSDSADDATSN) is disordered. The segment covering 151–166 (DDLDDDSDSADDATSN) has biased composition (acidic residues).

This sequence belongs to the p23/wos2 family.

The chain is Putative protein PTGES3L from Homo sapiens (Human).